Consider the following 152-residue polypeptide: Large-conductance mechanosensitive channel (152 aa).

Helical transmembrane passes span 14–34 (VVDM…VKSL), 39–59 (LMPG…FLVI), and 85–105 (GLFI…FLVI).

This sequence belongs to the MscL family. In terms of assembly, homopentamer.

Its subcellular location is the cell inner membrane. In terms of biological role, channel that opens in response to stretch forces in the membrane lipid bilayer. May participate in the regulation of osmotic pressure changes within the cell. The sequence is that of Large-conductance mechanosensitive channel from Syntrophus aciditrophicus (strain SB).